The sequence spans 671 residues: DNA ligase (671 aa).

NAD(+)-binding positions include 31–35, 80–81, and Glu110; these read DAEYD and SL. Lys112 functions as the N6-AMP-lysine intermediate in the catalytic mechanism. NAD(+) contacts are provided by Arg133, Glu167, Lys283, and Lys307. Positions 401, 404, 419, and 424 each coordinate Zn(2+). The 85-residue stretch at 587-671 folds into the BRCT domain; sequence EEELVFTGKT…YLPDEGGLNE (85 aa).

The protein belongs to the NAD-dependent DNA ligase family. LigA subfamily. Requires Mg(2+) as cofactor. It depends on Mn(2+) as a cofactor.

It catalyses the reaction NAD(+) + (deoxyribonucleotide)n-3'-hydroxyl + 5'-phospho-(deoxyribonucleotide)m = (deoxyribonucleotide)n+m + AMP + beta-nicotinamide D-nucleotide.. Its function is as follows. DNA ligase that catalyzes the formation of phosphodiester linkages between 5'-phosphoryl and 3'-hydroxyl groups in double-stranded DNA using NAD as a coenzyme and as the energy source for the reaction. It is essential for DNA replication and repair of damaged DNA. The chain is DNA ligase from Listeria monocytogenes serotype 4b (strain F2365).